The following is a 370-amino-acid chain: DNA replication and repair protein RecF (370 aa).

ATP is bound at residue 30 to 37 (GQNGMGKT).

Belongs to the RecF family.

It is found in the cytoplasm. Functionally, the RecF protein is involved in DNA metabolism; it is required for DNA replication and normal SOS inducibility. RecF binds preferentially to single-stranded, linear DNA. It also seems to bind ATP. The polypeptide is DNA replication and repair protein RecF (Bacteroides fragilis (strain ATCC 25285 / DSM 2151 / CCUG 4856 / JCM 11019 / LMG 10263 / NCTC 9343 / Onslow / VPI 2553 / EN-2)).